Here is a 120-residue protein sequence, read N- to C-terminus: Large ribosomal subunit protein uL18 (120 aa).

This sequence belongs to the universal ribosomal protein uL18 family. Part of the 50S ribosomal subunit; part of the 5S rRNA/L5/L18/L25 subcomplex. Contacts the 5S and 23S rRNAs.

Functionally, this is one of the proteins that bind and probably mediate the attachment of the 5S RNA into the large ribosomal subunit, where it forms part of the central protuberance. The protein is Large ribosomal subunit protein uL18 of Maricaulis maris (strain MCS10) (Caulobacter maris).